A 544-amino-acid chain; its full sequence is Protein RDR1 (544 aa).

Positions 14–40 (CETCRELKRKCDGNQPCGACVRFEYDC) form a DNA-binding region, zn(2)-C6 fungal-type. The interval 50–71 (KRRKTVEQDKEAPLPSPPVHVD) is disordered.

The protein resides in the nucleus. Its function is as follows. May act as a transcriptional repressor of multidrug resistance genes. This chain is Protein RDR1 (RDR1), found in Gibberella zeae (strain ATCC MYA-4620 / CBS 123657 / FGSC 9075 / NRRL 31084 / PH-1) (Wheat head blight fungus).